Reading from the N-terminus, the 189-residue chain is Vacuolar iron transporter homolog 2 (189 aa).

At methionine 1–alanine 10 the chain is on the cytoplasmic side. The chain crosses the membrane as a helical span at residues valine 11–valine 31. The Vacuolar portion of the chain corresponds to asparagine 32–methionine 38. A helical membrane pass occupies residues leucine 39–valine 59. Residues serine 60 to alanine 97 are Cytoplasmic-facing. Residues phenylalanine 98 to isoleucine 118 traverse the membrane as a helical segment. Over lysine 119–arginine 124 the chain is Vacuolar. A helical membrane pass occupies residues valine 125–tyrosine 145. Over leucine 146–leucine 159 the chain is Cytoplasmic. The helical transmembrane segment at leucine 160–phenylalanine 180 threads the bilayer. Over histidine 181–alanine 189 the chain is Vacuolar.

Belongs to the CCC1 family.

Its subcellular location is the vacuole membrane. It carries out the reaction Fe(2+)(in) = Fe(2+)(out). Functionally, probable vacuolar iron transporter that may be involved in the regulation of iron distribution throughout the plant. This chain is Vacuolar iron transporter homolog 2, found in Oryza sativa subsp. japonica (Rice).